A 312-amino-acid polypeptide reads, in one-letter code: Aldehyde reductase YPR1 (312 aa).

Residue Tyr-56 is the Proton donor of the active site. His-112 is a substrate binding site. 220–274 (SPFGSANAPLLKEQAIIDMAKKHGVEPAQLIISWSIQRGYVVLAKSVNPERIVSN) is an NADP(+) binding site.

The protein belongs to the aldo/keto reductase family.

Its subcellular location is the cytoplasm. It carries out the reaction a primary alcohol + NADP(+) = an aldehyde + NADPH + H(+). The catalysed reaction is 2-methylbutan-1-ol + NADP(+) = 2-methylbutanal + NADPH + H(+). The enzyme catalyses hexan-1-ol + NADP(+) = hexanal + NADPH + H(+). Its function is as follows. Aldehyde reductase with broad substrate specificity, catalyzing the NADPH-dependent reduction of aldehydes into the corresponding alcohols. In vitro, displays high specific activity towards 2-methylbutanal (2-methylbutyraldehyde), as well as other aldehydes such as hexanal (a toxic lipid peroxidation product and phytoalexin), but exhibits extremely low activity as a glycerol dehydrogenase. Seems to contribute to 2-methylbutanal reduction in vivo, and may therefore play a role in isoleucine catabolism and fusel alcohol formation. The protein is Aldehyde reductase YPR1 (YPR1) of Saccharomyces cerevisiae (strain ATCC 204508 / S288c) (Baker's yeast).